The chain runs to 346 residues: Sensor histidine kinase GraS (346 aa).

2 helical membrane-spanning segments follow: residues 15–35 (MNWI…SLID) and 43–63 (LFYI…LTYF). The region spanning 126 to 332 (EFVHDIKTPV…TVRLIFPLQN (207 aa)) is the Histidine kinase domain.

Interacts with GraX.

Its subcellular location is the cell membrane. The catalysed reaction is ATP + protein L-histidine = ADP + protein N-phospho-L-histidine.. Member of the two-component regulatory system GraR/GraS involved in resistance against cationic antimicrobial peptides (CAMPs). Functions as a sensor protein kinase which phosphorylates GraR through the auxiliary protein GraX. In turn, GraR up-regulates many genes such as adhesins, exoproteins, transporters, toxins, and proteins involved in cell wall synthesis. Down-regulates the expression of many genes involved in RNA and amino acid synthesis or glycolysis. In Staphylococcus aureus (strain Mu50 / ATCC 700699), this protein is Sensor histidine kinase GraS (graS).